A 514-amino-acid chain; its full sequence is Beta-glucosidase 16 (514 aa).

The N-terminal stretch at 1-21 (MRGKFLSLLLLITLACIGVSA) is a signal peptide. Glutamine 49 provides a ligand contact to a beta-D-glucoside. N-linked (GlcNAc...) asparagine glycosylation occurs at asparagine 80. A beta-D-glucoside is bound by residues histidine 153 and 198–199 (NE). The Proton donor role is filled by glutamate 199. A disulfide bond links cysteine 218 and cysteine 226. Tyrosine 343 lines the a beta-D-glucoside pocket. N-linked (GlcNAc...) asparagine glycosylation is present at asparagine 357. A beta-D-glucoside contacts are provided by residues glutamate 413, tryptophan 458, 465-466 (EW), and phenylalanine 474. Catalysis depends on glutamate 413, which acts as the Nucleophile.

The protein belongs to the glycosyl hydrolase 1 family. Expressed at low levels in cauline leaves and flowers.

It catalyses the reaction Hydrolysis of terminal, non-reducing beta-D-glucosyl residues with release of beta-D-glucose.. This is Beta-glucosidase 16 from Arabidopsis thaliana (Mouse-ear cress).